The following is a 70-amino-acid chain: DNA gyrase inhibitor YacG (70 aa).

Zn(2+) is bound by residues C9, C12, C28, and C32. Positions 44 to 70 (SRKIPGSSIDPESIVTTNNKQDNVDEQ) are disordered.

This sequence belongs to the DNA gyrase inhibitor YacG family. Interacts with GyrB. The cofactor is Zn(2+).

Functionally, inhibits all the catalytic activities of DNA gyrase by preventing its interaction with DNA. Acts by binding directly to the C-terminal domain of GyrB, which probably disrupts DNA binding by the gyrase. The polypeptide is DNA gyrase inhibitor YacG (Legionella pneumophila subsp. pneumophila (strain Philadelphia 1 / ATCC 33152 / DSM 7513)).